Here is a 135-residue protein sequence, read N- to C-terminus: Small ribosomal subunit protein uS11 (135 aa).

The span at 1–10 (MPPKTRSQTG) shows a compositional bias: polar residues. Positions 1-28 (MPPKTRSQTGAKKVRRKEKKNVAHGHAH) are disordered. Residues 12 to 28 (KKVRRKEKKNVAHGHAH) are compositionally biased toward basic residues.

This sequence belongs to the universal ribosomal protein uS11 family. Part of the 30S ribosomal subunit. Interacts with proteins S7 and S18. Binds to IF-3.

Its function is as follows. Located on the platform of the 30S subunit, it bridges several disparate RNA helices of the 16S rRNA. Forms part of the Shine-Dalgarno cleft in the 70S ribosome. The polypeptide is Small ribosomal subunit protein uS11 (Acidothermus cellulolyticus (strain ATCC 43068 / DSM 8971 / 11B)).